The following is a 691-amino-acid chain: Elongation factor G (691 aa).

The region spanning 8–283 (EDYRNFGIMA…AVVDFLPNPT (276 aa)) is the tr-type G domain. GTP-binding positions include 17 to 24 (AHIDAGKT), 81 to 85 (DTPGH), and 135 to 138 (NKMD).

The protein belongs to the TRAFAC class translation factor GTPase superfamily. Classic translation factor GTPase family. EF-G/EF-2 subfamily.

It is found in the cytoplasm. Functionally, catalyzes the GTP-dependent ribosomal translocation step during translation elongation. During this step, the ribosome changes from the pre-translocational (PRE) to the post-translocational (POST) state as the newly formed A-site-bound peptidyl-tRNA and P-site-bound deacylated tRNA move to the P and E sites, respectively. Catalyzes the coordinated movement of the two tRNA molecules, the mRNA and conformational changes in the ribosome. The chain is Elongation factor G from Maricaulis maris (strain MCS10) (Caulobacter maris).